The following is a 272-amino-acid chain: Homeobox protein Hox-D12 (272 aa).

Positions 204–263 (SRRKRKPYTKQQIAELENEFLANEFINRQKRKELSDRLNLSDQQVKIWFQNRRMKKKRLV) form a DNA-binding region, homeobox.

This sequence belongs to the Abd-B homeobox family.

The protein localises to the nucleus. In terms of biological role, sequence-specific transcription factor which is part of a developmental regulatory system that provides cells with specific positional identities on the anterior-posterior axis. This is Homeobox protein Hox-D12 (HOXD12) from Heterodontus francisci (Horn shark).